The following is an 84-amino-acid chain: Large ribosomal subunit protein bL31B (84 aa).

The protein belongs to the bacterial ribosomal protein bL31 family. Type B subfamily. As to quaternary structure, part of the 50S ribosomal subunit.

Its function is as follows. Binds the 23S rRNA. This Rhodococcus jostii (strain RHA1) protein is Large ribosomal subunit protein bL31B.